Here is a 271-residue protein sequence, read N- to C-terminus: MDSTFLASLVSGAAAGTSTDVVFFPIDTLKTRLQAKGGFFHNGGYRGIYRGLGSAVVASAPGASLFFVTYDSMKQQLRPVMGRWTASEQLAEVLTHMLSSSLGEMSACLVRVPAEVIKQRTQTHHTNSSLQTLRLILRDPTGEGVVRGLYRGWWTTIMREIPFTCIQFPLYEYLKKKWAAYAEIERVSAWQGAVCGSLAGGIAAAATTPLDVLKTRMMLHERRVPMLHLARTLFREEGARVFFRGIGPRTMWISAGGAIFLGVYEAVHSLF.

3 Solcar repeats span residues 3–76, 91–177, and 187–270; these read STFL…MKQQ, AEVL…LKKK, and VSAW…VHSL. Helical transmembrane passes span 6 to 26, 51 to 71, 97 to 117, 152 to 168, 193 to 213, and 251 to 271; these read LASL…FFPI, GLGS…VTYD, MLSS…AEVI, GWWT…CIQF, AVCG…LDVL, and MWIS…HSLF.

The protein belongs to the mitochondrial carrier (TC 2.A.29) family.

The protein localises to the mitochondrion inner membrane. This chain is Putative mitochondrial carrier protein PET8 (PET8), found in Eremothecium gossypii (strain ATCC 10895 / CBS 109.51 / FGSC 9923 / NRRL Y-1056) (Yeast).